Consider the following 826-residue polypeptide: Dolichyl-diphosphooligosaccharide--protein glycosyltransferase subunit STT3B (826 aa).

Residues 1 to 60 are disordered; the sequence is MAEPSAPESKHKSSLNSSPWSGLMALGNSRHGHHGPGAQCAHKAAGGAAPPKPAPAGLSG. An N-acetylalanine modification is found at A2. Residues 2–41 lie on the Cytoplasmic side of the membrane; sequence AEPSAPESKHKSSLNSSPWSGLMALGNSRHGHHGPGAQCA. A phosphoserine mark is found at S13, S18, and S29. Residues 37-49 are compositionally biased toward low complexity; it reads GAQCAHKAAGGAA. Residues 42 to 86 traverse the membrane as a helical segment; the sequence is HKAAGGAAPPKPAPAGLSGGLSQPAGWQSLLSFTILFLAWLAGFS. Residues 87–173 lie on the Lumenal side of the membrane; it reads SRLFAVIRFE…VHIRDVCVFL (87 aa). Residues 101–103 carry the DXD motif 1 motif; sequence EFD. D103 is a Mn(2+) binding site. A helical membrane pass occupies residues 174-192; that stretch reads APTFSGLTSISTFLLTREL. At 193 to 194 the chain is on the cytoplasmic side; the sequence is WN. The chain crosses the membrane as a helical span at residues 195–212; sequence QGAGLLAACFIAIVPGYI. At 213–223 the chain is on the lumenal side; it reads SRSVAGSFDNE. 2 residues coordinate Mn(2+): D221 and E223. The short motif at 221–223 is the DXD motif 2 element; it reads DNE. Residues 224–243 traverse the membrane as a helical segment; that stretch reads GIAIFALQFTYYLWVKSVKT. At 244–245 the chain is on the cytoplasmic side; that stretch reads GS. The chain crosses the membrane as a helical span at residues 246-260; sequence VFWTMCCCLSYFYMV. At 261–265 the chain is on the lumenal side; the sequence is SAWGG. A helical membrane pass occupies residues 266–282; the sequence is YVFIINLIPLHVFVLLL. The Cytoplasmic portion of the chain corresponds to 283–287; the sequence is MQRYS. The chain crosses the membrane as a helical span at residues 288–313; that stretch reads KRVYIAYSTFYIVGLILSMQIPFVGF. Residues 314 to 321 are Lumenal-facing; that stretch reads QPIRTSEH. Residues 322 to 341 traverse the membrane as a helical segment; it reads MAAAGVFALLQAYAFLQYLR. Over 342-350 the chain is Cytoplasmic; that stretch reads DRLTKQEFQ. A helical membrane pass occupies residues 351-371; it reads TLFFLGVSLAAGAVFLSVIYL. Residues 372–410 lie on the Lumenal side of the membrane; it reads TYTGYIAPWSGRFYSLWDTGYAKIHIPIIASVSEHQPTT. An SVSE motif motif is present at residues 402 to 405; that stretch reads SVSE. Residues 411–433 traverse the membrane as a helical segment; that stretch reads WVSFFFDLHILVCTFPAGLWFCI. Residues 434-439 lie on the Cytoplasmic side of the membrane; it reads KNINDE. Residues 440 to 456 form a helical membrane-spanning segment; the sequence is RVFVALYAISAVYFAGV. Topologically, residues 457–460 are lumenal; sequence MVRL. Residue R459 coordinates dolichyl diphosphooligosaccharide. Residues 461 to 482 form a helical membrane-spanning segment; the sequence is MLTLTPVVCMLSAIAFSNVFEH. Residues 483–526 lie on the Cytoplasmic side of the membrane; sequence YLGDDMKRENPPVEDSSDEDDKRNQGNLYDKAGKVRKHATEQEK. The interval 490–509 is disordered; sequence RENPPVEDSSDEDDKRNQGN. Phosphoserine occurs at positions 498 and 499. A helical transmembrane segment spans residues 527 to 552; sequence TEEGLGPNIKSIVTMLMLMLLMMFAV. At 553 to 826 the chain is on the lumenal side; sequence HCTWVTSNAY…KGKKISKKTV (274 aa). The interval 604 to 606 is interacts with target acceptor peptide in protein substrate; sequence WWD. The WWDYG motif signature appears at 604–608; sequence WWDYG. Y609 is a dolichyl diphosphooligosaccharide binding site. N616 and N623 each carry an N-linked (GlcNAc...) asparagine glycan. N627 carries an N-linked (GlcNAc...) (high mannose) asparagine glycan. N641 carries an N-linked (GlcNAc...) asparagine glycan. The short motif at 671–678 is the DK motif element; the sequence is DINKFLWM.

Belongs to the STT3 family. As to quaternary structure, component of the oligosaccharyltransferase (OST) complex. There are 2 OST complexes, OST-A and OST-B, which contain STT3A or STT3B as catalytic subunit, respectively. OST-A and OST-B contain common core subunits RPN1, RPN2, OST48, OST4, DAD1 and TMEM258, and OST-B contains either MAGT1 or TUSC3 as specific accessory subunit. Requires Mg(2+) as cofactor. It depends on Mn(2+) as a cofactor. As to expression, expressed in heart, brain, placenta, lung, liver, muscle, kidney and pancreas. Expressed in skin fibroblasts (at protein level).

Its subcellular location is the endoplasmic reticulum. The protein localises to the endoplasmic reticulum membrane. The catalysed reaction is a di-trans,poly-cis-dolichyl diphosphooligosaccharide + L-asparaginyl-[protein] = N(4)-(oligosaccharide-(1-&gt;4)-N-acetyl-beta-D-glucosaminyl-(1-&gt;4)-N-acetyl-beta-D-glucosaminyl)-L-asparaginyl-[protein] + a di-trans,poly-cis-dolichyl diphosphate + H(+). It functions in the pathway protein modification; protein glycosylation. Catalytic subunit of the oligosaccharyl transferase (OST) complex that catalyzes the initial transfer of a defined glycan (Glc(3)Man(9)GlcNAc(2) in eukaryotes) from the lipid carrier dolichol-pyrophosphate to an asparagine residue within an Asn-X-Ser/Thr consensus motif in nascent polypeptide chains, the first step in protein N-glycosylation. N-glycosylation occurs cotranslationally and the complex associates with the Sec61 complex at the channel-forming translocon complex that mediates protein translocation across the endoplasmic reticulum (ER). All subunits are required for a maximal enzyme activity. This subunit contains the active site and the acceptor peptide and donor lipid-linked oligosaccharide (LLO) binding pockets. STT3B is present in a small subset of OST complexes (OST-B) and mediates both cotranslational and post-translational N-glycosylation of target proteins: STT3B-containing complexes are required for efficient post-translational glycosylation and while they are less competent than STT3A-containing complexes for cotranslational glycosylation, they have the ability to mediate glycosylation of some nascent sites that are not accessible for STT3A. STT3B-containing complexes also act post-translationally and mediate modification of skipped glycosylation sites in unfolded proteins. Plays a role in ER-associated degradation (ERAD) pathway that mediates ubiquitin-dependent degradation of misfolded endoplasmic reticulum proteins by mediating N-glycosylation of unfolded proteins, which are then recognized by the ERAD pathway and targeted for degradation. Mediates glycosylation of the disease variant AMYL-TTR 'Asp-38' of TTR at 'Asn-118', leading to its degradation. The chain is Dolichyl-diphosphooligosaccharide--protein glycosyltransferase subunit STT3B from Homo sapiens (Human).